The primary structure comprises 187 residues: PsbQ-like protein 3, chloroplastic (187 aa).

The N-terminal 32 residues, 1-32, are a transit peptide targeting the chloroplast; that stretch reads MAISKPPPLHFTFFHNQDSSIDTSDSNLALSI. The N-terminal 28 residues, 33 to 60, are a transit peptide targeting the thylakoid; sequence DTSRRRRDVLLTISGTLIPQLFFFDRKR.

Belongs to the PsbQ family. In terms of assembly, subunit of the lumenal protuberance of the NDH complex.

Its subcellular location is the plastid. It localises to the chloroplast thylakoid membrane. Required for both formation and activity of the chloroplast NAD(P)H dehydrogenase (NDH) complex. The polypeptide is PsbQ-like protein 3, chloroplastic (PQL3) (Arabidopsis thaliana (Mouse-ear cress)).